The chain runs to 168 residues: Thiosulfate dehydrogenase [quinone] small subunit (168 aa).

A helical transmembrane segment spans residues 6-26; the sequence is IIGIIFAILVVGWILATGQWA.

As to quaternary structure, heterodimer of a large and a small subunit in a 2:2 stoichiometry. TQO may associate with the terminal oxidase formed by doxBCE. The N-terminus is blocked. Post-translationally, glycosylated.

The protein localises to the cell membrane. The catalysed reaction is 6-decylubiquinone + 2 thiosulfate = 6-decylubiquinol + tetrathionate. Its activity is regulated as follows. Inhibited by sulfite, metabisulfite and dithonite. In terms of biological role, TQO plays a role in sulfur oxidation and is proposed to couple sulfur oxidation to dioxygen reduction; caldariellaquinone or sulfolobus quinone seem to serve to transfer electrons to the electron transport chain terminal oxidase formed by DoxBCE. In Acidianus ambivalens (Desulfurolobus ambivalens), this protein is Thiosulfate dehydrogenase [quinone] small subunit (doxA).